The following is a 587-amino-acid chain: MASLRRLTELLCLPVTATAADIKTAYRRTALKYHPDKGGDEEKMKELNTLMEEFRETEGLRADETLEDSDPEPEESGYATFENVSVPDIDGAFFKLMKLKKCMQTYFSVNERRKQQSCPDCHLLITSITKMPQLKAHLYEHFGIKGHIVAHWTGIALLVLQLEKPTRISTVHNFCKKYCTISICSVRGIKKNCVHALIKTLLDVPGLDLEECSIDMNVVDEKQFMHAMLYDYAVQIDCTDALLLLAIYKRLAQPTDKCPECQKDKDTVKRKRSTHIDDHPRHQHNASLFLHIKDQKRLCQCAVDAVLAEKRFRSATMTRDERLKERFRTVLRNIQELLDGETEAIDDFVTAILLFNMLFPDVDVIVDILQTMVKNPPKRRYYIFKGPVNTGKTTVAAAILALCTGASLNVNGTPDRLQFELGCAIDQFMVLFEDVKGTPEPDTNLPSGFGMVNLDNLRDHLEGSVPVNLERKHQNKVSQIFPPGIITMNNYVLPHTIQARARTLVNFKHIKVYAKALRNNISVLEQRLITKPETLLAYLLIRPESEKEISADLRAEFLTVIENLKFEVDERFFQYNNRLHEGLCVHE.

Residues 6-82 (RLTELLCLPV…PEESGYATFE (77 aa)) form the J domain. The interval 58-78 (EGLRADETLEDSDPEPEESGY) is disordered. Residues 65-75 (TLEDSDPEPEE) show a composition bias toward acidic residues. Residues 102 to 219 (CMQTYFSVNE…EECSIDMNVV (118 aa)) constitute a DNA-binding region (T-ag OBD). A T-ag D1-type zinc finger spans residues 221-319 (EKQFMHAMLY…KRFRSATMTR (99 aa)). 4 residues coordinate Zn(2+): cysteine 258, cysteine 261, histidine 275, and histidine 279. Residues 360–520 (PDVDVIVDIL…KVYAKALRNN (161 aa)) form the SF3 helicase domain. Position 386 to 393 (386 to 393 (GPVNTGKT)) interacts with ATP.

In terms of assembly, forms homohexamers in the presence of ATP. Interacts with host HDAC1. Interacts (via LXCXE domain) with host RB1; the interaction induces the aberrant dissociation of RB1-E2F1 complex thereby disrupting RB1's activity. Interacts (via LXCXE domain) with host pRB-related proteins RBL1 and RBL2. Interacts (via C-terminus) with host TOP1 and POLA1 allowing DNA replication. Interacts with host TP53, inhibiting TP53 binding to DNA. Interacts with host preinitiation complex components TBP, TFIIA and TFIID to regulate transcription initiation. Mg(2+) serves as cofactor. Post-translationally, phosphorylated on both serine and threonine residues. Small t antigen inhibits the dephosphorylation by the AC form of PP2A. In terms of processing, O-Glycosylated near the C-terminal region. Acetylated by CBP in a TP53-dependent manner.

Its subcellular location is the host nucleus. It carries out the reaction Couples ATP hydrolysis with the unwinding of duplex DNA by translocating in the 3'-5' direction.. The catalysed reaction is ATP + H2O = ADP + phosphate + H(+). Functionally, isoform large T antigen is a key early protein essential for both driving viral replication and inducing cellular transformation. Plays a role in viral genome replication by driving entry of quiescent cells into the cell cycle and by autoregulating the synthesis of viral early mRNA. Displays highly oncogenic activities by corrupting the host cellular checkpoint mechanisms that guard cell division and the transcription, replication, and repair of DNA. Participates in the modulation of cellular gene expression preceeding viral DNA replication. This step involves binding to host key cell cycle regulators retinoblastoma protein RB1/pRb and TP53. Induces the disassembly of host E2F1 transcription factors from RB1, thus promoting transcriptional activation of E2F1-regulated S-phase genes. Inhibits host TP53 binding to DNA, abrogating the ability of TP53 to stimulate gene expression. Plays the role of a TFIID-associated factor (TAF) in transcription initiation for all three RNA polymerases, by stabilizing the TBP-TFIIA complex on promoters. Initiates viral DNA replication and unwinding via interactions with the viral origin of replication. Binds two adjacent sites in the SV40 origin. The replication fork movement is facilitated by Large T antigen helicase activity. Has processive 3'-5' DNA helicase activity which requires a short 3' single-stranded region and ATP. Activates the transcription of viral late mRNA, through host TBP and TFIIA stabilization. Interferes with histone deacetylation mediated by HDAC1, leading to activation of transcription. The sequence is that of Large T antigen from Budgerigar fledgling disease virus (BFPyV).